The chain runs to 432 residues: Glutamate-1-semialdehyde 2,1-aminomutase (432 aa).

At lysine 269 the chain carries N6-(pyridoxal phosphate)lysine.

This sequence belongs to the class-III pyridoxal-phosphate-dependent aminotransferase family. HemL subfamily. Homodimer. It depends on pyridoxal 5'-phosphate as a cofactor.

The protein resides in the cytoplasm. The catalysed reaction is (S)-4-amino-5-oxopentanoate = 5-aminolevulinate. Its pathway is porphyrin-containing compound metabolism; protoporphyrin-IX biosynthesis; 5-aminolevulinate from L-glutamyl-tRNA(Glu): step 2/2. This chain is Glutamate-1-semialdehyde 2,1-aminomutase, found in Desulforudis audaxviator (strain MP104C).